The sequence spans 311 residues: Energy-coupling factor transporter ATP-binding protein EcfA2 (311 aa).

An ABC transporter domain is found at 3–265; the sequence is IKLKDVKFTF…IAFLEENNLQ (263 aa). 40–47 provides a ligand contact to ATP; sequence GQTGSGKT.

The protein belongs to the ABC transporter superfamily. Energy-coupling factor EcfA family. As to quaternary structure, forms a stable energy-coupling factor (ECF) transporter complex composed of 2 membrane-embedded substrate-binding proteins (S component), 2 ATP-binding proteins (A component) and 2 transmembrane proteins (T component).

The protein localises to the cell membrane. Its function is as follows. ATP-binding (A) component of a common energy-coupling factor (ECF) ABC-transporter complex. Unlike classic ABC transporters this ECF transporter provides the energy necessary to transport a number of different substrates. In Mycoplasmopsis synoviae (strain 53) (Mycoplasma synoviae), this protein is Energy-coupling factor transporter ATP-binding protein EcfA2.